Reading from the N-terminus, the 379-residue chain is Hydrogenase expression/formation protein HupD (379 aa).

Residues Cys36, Cys64, and Cys67 each coordinate Fe cation.

Belongs to the HypD family.

The protein is Hydrogenase expression/formation protein HupD (hupD) of Azotobacter chroococcum mcd 1.